The chain runs to 732 residues: MVSPTQITPVHPDVLHALKICQYHDPHGVYGWHEVDAERAVIRTRHIGAERVETLLSDSTVVELAAVGDDIFEAIVDHDASCDYRLRIHWQGGQVTEQADAYHFLPTLGDLDLHLINEGRHERLWEVLGANPTTITTAMGDVEGTAFAVWAPNASGVAVIGDFCGWNPSQYPMRSLGSTGIWELFIPNIGVGTVYKFAIHTHEGHRLDKADPMAKRAEVAPATGSIIASSSYTWNDDTWMTNRAHTDHDNTAMSVYEVHLGSWSQGQNYEELATNLVDYVKEMGYTHVEFLPVAEHPFGGSWGYQVSGYYAPTSRWGTPDQLRLLIDAFHQAGIGVIVDWVPAHFPKDAFALGRFDGQALYEHPDWRRGEQKDWGTYVFDFGRNEVRNFLVANALYWLEEFHVDGLRVDAVASMLYLDYSREPGEWLPNIYGGRENLEAVQFLQEMNATVHKSHPGVMTIAEESTSWPGVTSPTWEGGLGFSMKWNMGWMNDTLEYFSHEPIHRMYHHNDITFSMVYAYSEKFVLPFSHDEVVHGKGSLWTRMPGDAWNKAAGLRTLYAYMYAHPGKNLLFQGQEFGQVKEWSEERSLDWGDMDGWEGEYHRGIRTLVQDLNALYKDSPALYSQDNNPAGFSWTKSDDAANNILSFVRYGADGSKILAVFNFGGADHPSYKLGVPEGGNWKCILNTDAGIYEGEDNYLDSDVMAWDTDWDGYQHSLTVHIPAMSGQLYRWEA.

Asp-409 acts as the Nucleophile in catalysis. Residue Glu-462 is the Proton donor of the active site.

It belongs to the glycosyl hydrolase 13 family. GlgB subfamily. In terms of assembly, monomer.

It carries out the reaction Transfers a segment of a (1-&gt;4)-alpha-D-glucan chain to a primary hydroxy group in a similar glucan chain.. It participates in glycan biosynthesis; glycogen biosynthesis. Functionally, catalyzes the formation of the alpha-1,6-glucosidic linkages in glycogen by scission of a 1,4-alpha-linked oligosaccharide from growing alpha-1,4-glucan chains and the subsequent attachment of the oligosaccharide to the alpha-1,6 position. In Corynebacterium diphtheriae (strain ATCC 700971 / NCTC 13129 / Biotype gravis), this protein is 1,4-alpha-glucan branching enzyme GlgB.